Reading from the N-terminus, the 158-residue chain is Putative pre-16S rRNA nuclease (158 aa).

The protein belongs to the YqgF nuclease family.

Its subcellular location is the cytoplasm. Its function is as follows. Could be a nuclease involved in processing of the 5'-end of pre-16S rRNA. The sequence is that of Putative pre-16S rRNA nuclease from Acidiphilium cryptum (strain JF-5).